The primary structure comprises 194 residues: Peptidyl-tRNA hydrolase (194 aa).

Tyr-16 contributes to the tRNA binding site. The Proton acceptor role is filled by His-21. TRNA-binding residues include Phe-67, Asn-69, and Asn-115.

It belongs to the PTH family. As to quaternary structure, monomer.

Its subcellular location is the cytoplasm. It catalyses the reaction an N-acyl-L-alpha-aminoacyl-tRNA + H2O = an N-acyl-L-amino acid + a tRNA + H(+). Hydrolyzes ribosome-free peptidyl-tRNAs (with 1 or more amino acids incorporated), which drop off the ribosome during protein synthesis, or as a result of ribosome stalling. In terms of biological role, catalyzes the release of premature peptidyl moieties from peptidyl-tRNA molecules trapped in stalled 50S ribosomal subunits, and thus maintains levels of free tRNAs and 50S ribosomes. This is Peptidyl-tRNA hydrolase from Escherichia coli O81 (strain ED1a).